The following is a 311-amino-acid chain: tRNA pseudouridine synthase B (311 aa).

D49 functions as the Nucleophile in the catalytic mechanism.

This sequence belongs to the pseudouridine synthase TruB family. Type 1 subfamily.

It catalyses the reaction uridine(55) in tRNA = pseudouridine(55) in tRNA. Responsible for synthesis of pseudouridine from uracil-55 in the psi GC loop of transfer RNAs. In Rhizobium meliloti (strain 1021) (Ensifer meliloti), this protein is tRNA pseudouridine synthase B.